We begin with the raw amino-acid sequence, 256 residues long: Trans-aconitate 2-methyltransferase (256 aa).

The protein belongs to the methyltransferase superfamily. Tam family.

The protein localises to the cytoplasm. The catalysed reaction is trans-aconitate + S-adenosyl-L-methionine = (E)-3-(methoxycarbonyl)pent-2-enedioate + S-adenosyl-L-homocysteine. Functionally, catalyzes the S-adenosylmethionine monomethyl esterification of trans-aconitate. The sequence is that of Trans-aconitate 2-methyltransferase from Rhodopseudomonas palustris (strain BisB5).